We begin with the raw amino-acid sequence, 492 residues long: UDP-N-acetylmuramate--L-alanine ligase (492 aa).

126–132 is a binding site for ATP; that stretch reads GTHGKTT.

The protein belongs to the MurCDEF family.

Its subcellular location is the cytoplasm. The enzyme catalyses UDP-N-acetyl-alpha-D-muramate + L-alanine + ATP = UDP-N-acetyl-alpha-D-muramoyl-L-alanine + ADP + phosphate + H(+). It functions in the pathway cell wall biogenesis; peptidoglycan biosynthesis. Cell wall formation. In Serratia proteamaculans (strain 568), this protein is UDP-N-acetylmuramate--L-alanine ligase.